Here is a 466-residue protein sequence, read N- to C-terminus: Glutamate-1-semialdehyde 2,1-aminomutase (466 aa).

Lys292 bears the N6-(pyridoxal phosphate)lysine mark.

Belongs to the class-III pyridoxal-phosphate-dependent aminotransferase family. HemL subfamily. Homodimer. Pyridoxal 5'-phosphate is required as a cofactor.

It localises to the cytoplasm. It catalyses the reaction (S)-4-amino-5-oxopentanoate = 5-aminolevulinate. It participates in porphyrin-containing compound metabolism; protoporphyrin-IX biosynthesis; 5-aminolevulinate from L-glutamyl-tRNA(Glu): step 2/2. This Tropheryma whipplei (strain TW08/27) (Whipple's bacillus) protein is Glutamate-1-semialdehyde 2,1-aminomutase.